The following is a 61-amino-acid chain: Sec-independent protein translocase protein TatA (61 aa).

The helical transmembrane segment at Met1–Phe21 threads the bilayer.

Belongs to the TatA/E family. Forms a complex with TatC.

The protein resides in the cell membrane. Functionally, part of the twin-arginine translocation (Tat) system that transports large folded proteins containing a characteristic twin-arginine motif in their signal peptide across membranes. TatA could form the protein-conducting channel of the Tat system. The polypeptide is Sec-independent protein translocase protein TatA (Bacillus anthracis (strain A0248)).